The following is a 120-amino-acid chain: Cell cycle protein GpsB (120 aa).

Residues 34 to 74 (LDDVIKDYDTYNKELERLNDENERLRAKVDELNRQVEVGSS) adopt a coiled-coil conformation. A disordered region spans residues 69–90 (VEVGSSMSNQTASRQPVSSATN). The segment covering 71-90 (VGSSMSNQTASRQPVSSATN) has biased composition (polar residues).

It belongs to the GpsB family. As to quaternary structure, forms polymers through the coiled coil domains. Interacts with PBP1, MreC and EzrA.

It localises to the cytoplasm. Divisome component that associates with the complex late in its assembly, after the Z-ring is formed, and is dependent on DivIC and PBP2B for its recruitment to the divisome. Together with EzrA, is a key component of the system that regulates PBP1 localization during cell cycle progression. Its main role could be the removal of PBP1 from the cell pole after pole maturation is completed. Also contributes to the recruitment of PBP1 to the division complex. Not essential for septum formation. The chain is Cell cycle protein GpsB from Limosilactobacillus reuteri (strain DSM 20016) (Lactobacillus reuteri).